The chain runs to 656 residues: DNA ligase (656 aa).

NAD(+) is bound by residues 32–36 (DEEYD), 81–82 (SM), and glutamate 112. The N6-AMP-lysine intermediate role is filled by lysine 114. NAD(+)-binding residues include arginine 135, glutamate 169, lysine 284, and lysine 308. Zn(2+) is bound by residues cysteine 402, cysteine 405, cysteine 418, and cysteine 423. Residues 577–656 (VQKTPFTGKT…DMWKMLKEGK (80 aa)) form the BRCT domain.

The protein belongs to the NAD-dependent DNA ligase family. LigA subfamily. The cofactor is Mg(2+). Requires Mn(2+) as cofactor.

It catalyses the reaction NAD(+) + (deoxyribonucleotide)n-3'-hydroxyl + 5'-phospho-(deoxyribonucleotide)m = (deoxyribonucleotide)n+m + AMP + beta-nicotinamide D-nucleotide.. Functionally, DNA ligase that catalyzes the formation of phosphodiester linkages between 5'-phosphoryl and 3'-hydroxyl groups in double-stranded DNA using NAD as a coenzyme and as the energy source for the reaction. It is essential for DNA replication and repair of damaged DNA. The chain is DNA ligase from Nautilia profundicola (strain ATCC BAA-1463 / DSM 18972 / AmH).